A 406-amino-acid chain; its full sequence is MKAVIFIMDGLGDRPNKDGNTPLKEAKTPVMDKMAKEGICGLMNAVDIGVRPGSDTAHLAILGYDPYTTYTGRGPFEACGVGVTVKPGDIAFRCNFSTVDENFTVMDRRAGRIENTLELEKELDGLKIDDVDIIFKESGGYRAALVLRGPGLSDKISDADPKKEGKKVKDINPLDDSKEAKKTAEIVNKLLKIAYEKLDKHPVNEERRKQNLPVANMIVPRGVGQVPEIMQFTEKTGLKGACIAGTGLIKGIAKMVGLDVIDVEGCDGTPNSDFMAKAFAIVKTLEDYDFILVNVKGADEAGHDGNYELKKEIIERIDGMLDYITKNINKDEVYIAMSGDHSTPIEEMDHSADPLPIVIWGKSVRVDDVEKFDEFSTYKGGLNWIKGTNIMPILMDLMSIAKKYGA.

The protein belongs to the BPG-independent phosphoglycerate mutase family. A-PGAM subfamily.

It carries out the reaction (2R)-2-phosphoglycerate = (2R)-3-phosphoglycerate. It participates in carbohydrate degradation; glycolysis; pyruvate from D-glyceraldehyde 3-phosphate: step 3/5. Functionally, catalyzes the interconversion of 2-phosphoglycerate and 3-phosphoglycerate. This is 2,3-bisphosphoglycerate-independent phosphoglycerate mutase from Methanococcus maripaludis (strain C6 / ATCC BAA-1332).